Here is a 335-residue protein sequence, read N- to C-terminus: Probable BOI-related E3 ubiquitin-protein ligase 3 (335 aa).

The WRD domain stretch occupies residues 196–232 (LEEKVKSLCVENQIWRDVAQSNEATVNALRSNLQQVL). The segment at 287-322 (CRSCGKGEASVLLLPCRHMCLCSVCGSSLNTCPICK) adopts an RING-type zinc-finger fold.

Interacts with the DELLA proteins GAI, RGA, RGL1, RGL2 and RGL3.

The enzyme catalyses S-ubiquitinyl-[E2 ubiquitin-conjugating enzyme]-L-cysteine + [acceptor protein]-L-lysine = [E2 ubiquitin-conjugating enzyme]-L-cysteine + N(6)-ubiquitinyl-[acceptor protein]-L-lysine.. The protein operates within protein degradation; proteasomal ubiquitin-dependent pathway. Functionally, probable E3 ubiquitin-protein ligase. Has no effect on the stability of the DELLA proteins. This is Probable BOI-related E3 ubiquitin-protein ligase 3 (BRG3) from Arabidopsis thaliana (Mouse-ear cress).